The sequence spans 847 residues: Guanine nucleotide exchange factor VAV3 (847 aa).

The Calponin-homology (CH) domain maps to 1 to 119 (MEPWKQCAQW…ETLSRLSRTP (119 aa)). Tyrosine 141 carries the phosphotyrosine modification. One can recognise a DH domain in the interval 192–371 (IRSCCLAEIK…KDLAQYVNEV (180 aa)). The PH domain maps to 400–502 (RPQGDGEIRI…WLEQFEMALS (103 aa)). The segment at 513–562 (FHDFKMHTFTRVTSCKVCQMLLRGTFYQGYLCFKCGARAHKECLGRVDNC) adopts a Phorbol-ester/DAG-type zinc-finger fold. The sufficient for interaction with ROS1 stretch occupies residues 560 to 847 (DNCGRVNSGE…FPSTYVEEDE (288 aa)). In terms of domain architecture, SH3 1 spans 592–660 (PGLPKMQVIR…PSDAVKPCPC (69 aa)). In terms of domain architecture, SH2 spans 672–766 (WYAGAMERLQ…TLDTTLQFPY (95 aa)). An SH3 2 domain is found at 788-847 (KVLGIAIARYDFCARDMRELSLLKGDVVKIYTKMSANGWWRGEVNGRVGWFPSTYVEEDE).

As to quaternary structure, interacts with the PH domain of SH2B2. Interacts (via SH2 domains) with the phosphorylated form of EPHA2. Interacts with ROS1; constitutive interaction that mediates VAV3 phosphorylation. Post-translationally, phosphorylated. Phosphorylation can be mediated by ROS1. In osteoclasts, undergoes tyrosine phosphorylation in response to CSF1. Isoform 1 and isoform 3 are widely expressed; both are expressed at very low levels in skeletal muscle. In keratinocytes, isoform 1 is less abundant than isoform 3. Isoform 3 is detected at very low levels, if any, in adrenal gland, bone marrow, spleen, fetal brain and spinal cord; in these tissues, isoform 1 is readily detectable.

Functionally, exchange factor for GTP-binding proteins RhoA, RhoG and, to a lesser extent, Rac1. Binds physically to the nucleotide-free states of those GTPases. Plays an important role in angiogenesis. Its recruitment by phosphorylated EPHA2 is critical for EFNA1-induced RAC1 GTPase activation and vascular endothelial cell migration and assembly. May be important for integrin-mediated signaling, at least in some cell types. In osteoclasts, along with SYK tyrosine kinase, required for signaling through integrin alpha-v/beta-1 (ITAGV-ITGB1), a crucial event for osteoclast proper cytoskeleton organization and function. This signaling pathway involves RAC1, but not RHO, activation. Necessary for proper wound healing. In the course of wound healing, required for the phagocytotic cup formation preceding macrophage phagocytosis of apoptotic neutrophils. Responsible for integrin beta-2 (ITGB2)-mediated macrophage adhesion and, to a lesser extent, contributes to beta-3 (ITGB3)-mediated adhesion. Does not affect integrin beta-1 (ITGB1)-mediated adhesion. This Homo sapiens (Human) protein is Guanine nucleotide exchange factor VAV3 (VAV3).